We begin with the raw amino-acid sequence, 89 residues long: Neuropeptide S (89 aa).

The first 23 residues, 1-23 (MIGSLKLSFVLALSLSVMHVLWC), serve as a signal peptide directing secretion. A propeptide spanning residues 24-69 (YPVLSSKVPGKPDYFLILLSSCPARLEGSDRLAFLKPILEKTSMKR) is cleaved from the precursor.

It localises to the secreted. Functionally, may play an important anorexigenic role. Modulates arousal and anxiety as well as increases locomotor activity. Binds to its receptor NPSR1 with nanomolar affinity to increase intracellular calcium concentrations. The chain is Neuropeptide S (Nps) from Mus musculus (Mouse).